The primary structure comprises 71 residues: V-type proton ATPase subunit e (71 aa).

The Lumenal segment spans residues 1–2; it reads MS. Residues 3–23 traverse the membrane as a helical segment; it reads FFHVVFVAFVIAAIGAAGWFV. Topologically, residues 24-35 are cytoplasmic; sequence TPKGKNQTLLRT. Residues 36–56 form a helical membrane-spanning segment; that stretch reads SLLLTLTCCYLMWAITYLCQL. At 57–71 the chain is on the lumenal side; it reads HPLITPRRSDLRMEY.

This sequence belongs to the V-ATPase e1/e2 subunit family. In terms of assembly, V-ATPase is a heteromultimeric enzyme composed of a peripheral catalytic V1 complex (components A to H) attached to an integral membrane V0 proton pore complex (components: a, c, c', c'', d, e, f and VOA1).

It is found in the vacuole membrane. Functionally, subunit of the V0 complex of vacuolar(H+)-ATPase (V-ATPase), a multisubunit enzyme composed of a peripheral complex (V1) that hydrolyzes ATP and a membrane integral complex (V0) that translocates protons. V-ATPase is responsible for acidifying and maintaining the pH of intracellular compartments. This Cryptococcus neoformans var. neoformans serotype D (strain JEC21 / ATCC MYA-565) (Filobasidiella neoformans) protein is V-type proton ATPase subunit e (VMA9).